The sequence spans 180 residues: MQNPQNLIWIDLEMTGLDPDSDVIIEMATIVTDSELNTLAEGPVIAIHHSDEVLARMDEWNTRTHGNSGLTQRVRESKVSMAEAEAQTIAFLEQWVPKGKSPICGNSICQDRRFLYRHMRGLENYFHYRNLDVSTLKELAARWAPDVRDSFKKGSTHLALDDIRESIAELRHYREHFIKF.

The Exonuclease domain maps to 7–170 (LIWIDLEMTG…DDIRESIAEL (164 aa)). Tyr128 is an active-site residue.

The protein belongs to the oligoribonuclease family.

The protein localises to the cytoplasm. In terms of biological role, 3'-to-5' exoribonuclease specific for small oligoribonucleotides. This chain is Oligoribonuclease, found in Pseudomonas entomophila (strain L48).